The chain runs to 101 residues: Small ribosomal subunit protein uS14A (101 aa).

The disordered stretch occupies residues 31-67; the sequence is LRRPSSTEAERLAAQRELRRQPRDASPTRVRNRDQID. Residues 38 to 53 are compositionally biased toward basic and acidic residues; that stretch reads EAERLAAQRELRRQPR.

Belongs to the universal ribosomal protein uS14 family. In terms of assembly, part of the 30S ribosomal subunit. Contacts proteins S3 and S10.

In terms of biological role, binds 16S rRNA, required for the assembly of 30S particles and may also be responsible for determining the conformation of the 16S rRNA at the A site. The sequence is that of Small ribosomal subunit protein uS14A from Streptomyces coelicolor (strain ATCC BAA-471 / A3(2) / M145).